The chain runs to 421 residues: 2-deoxystreptamine N-acetyl-D-glucosaminyltransferase (421 aa).

The protein belongs to the glycosyltransferase group 1 family. Glycosyltransferase 4 subfamily.

The enzyme catalyses 2-deoxystreptamine + UDP-N-acetyl-alpha-D-glucosamine = 2'-N-acetylparomamine + UDP + H(+). Its pathway is antibiotic biosynthesis; neomycin biosynthesis. Its function is as follows. Glycosyltransferase involved in the biosynthesis of neomycin by mediating conversion of 2-deoxystreptamine (2-DOS) to 2'-N-acetylparomamine using UDP-alpha-D-glucosamine as sugar donor. This Streptomyces fradiae (Streptomyces roseoflavus) protein is 2-deoxystreptamine N-acetyl-D-glucosaminyltransferase (neoD).